A 181-amino-acid polypeptide reads, in one-letter code: uncharacterized protein (181 aa).

A disordered region spans residues 151–181 (AQKKKDFQEPENKHEQLTSTKAPCQENWSDF). Residues 154-166 (KKDFQEPENKHEQ) show a composition bias toward basic and acidic residues. The span at 167 to 181 (LTSTKAPCQENWSDF) shows a compositional bias: polar residues.

This is an uncharacterized protein from Caenorhabditis elegans.